The sequence spans 740 residues: Vacuolar protein sorting-associated protein 51 homolog (740 aa).

Coiled coils occupy residues 65-87 (SATD…VNLL) and 322-344 (RALD…LEVQ).

It belongs to the VPS51 family. As to quaternary structure, component of the Golgi-associated retrograde protein (GARP) complex.

May act as a component of the GARP complex that is involved in retrograde transport from early and late endosomes to the trans-Golgi network (TGN). The polypeptide is Vacuolar protein sorting-associated protein 51 homolog (Drosophila melanogaster (Fruit fly)).